The following is a 675-amino-acid chain: Vitamin K-dependent protein S (675 aa).

The signal sequence occupies residues methionine 1–threonine 24. Positions asparagine 25 to arginine 41 are excised as a propeptide. A Gla domain is found at alanine 42–glycine 87. A 4-carboxyglutamate mark is found at glutamate 47, glutamate 48, glutamate 55, glutamate 57, glutamate 60, glutamate 61, glutamate 66, glutamate 67, glutamate 70, glutamate 73, and glutamate 77. A disulfide bridge connects residues cysteine 58 and cysteine 63. A thrombin-sensitive region spans residues cysteine 88–alanine 116. Residues isoleucine 117–glutamine 155 enclose the EGF-like 1 domain. Cystine bridges form between cysteine 121/cysteine 134, cysteine 126/cysteine 143, cysteine 145/cysteine 154, cysteine 161/cysteine 175, cysteine 171/cysteine 184, cysteine 186/cysteine 199, cysteine 205/cysteine 217, cysteine 212/cysteine 226, cysteine 228/cysteine 241, cysteine 247/cysteine 256, cysteine 252/cysteine 265, cysteine 267/cysteine 282, and cysteine 449/cysteine 475. Residue aspartate 136 is modified to (3R)-3-hydroxyaspartate. One can recognise an EGF-like 2; calcium-binding domain in the interval aspartate 157 to lysine 200. Positions aspartate 201–lysine 242 constitute an EGF-like 3; calcium-binding domain. The EGF-like 4; calcium-binding domain occupies aspartate 243–glutamate 283. Laminin G-like domains lie at leucine 299–cysteine 475 and tyrosine 484–cysteine 665. N-linked (GlcNAc...) asparagine glycans are attached at residues asparagine 499 and asparagine 509. Cysteine 638 and cysteine 665 are disulfide-bonded.

In terms of processing, the iron and 2-oxoglutarate dependent 3-hydroxylation of aspartate and asparagine is (R) stereospecific within EGF domains. In terms of tissue distribution, plasma.

It localises to the secreted. Anticoagulant plasma protein; it is a cofactor to activated protein C in the degradation of coagulation factors Va and VIIIa. It helps to prevent coagulation and stimulating fibrinolysis. In Mus musculus (Mouse), this protein is Vitamin K-dependent protein S (Pros1).